A 353-amino-acid chain; its full sequence is Peroxisome assembly protein 12-B (353 aa).

At Met-1 to Ser-19 the chain is on the peroxisomal matrix side. The chain crosses the membrane as a helical span at residues Ile-20 to Ser-47. Residues Asn-48–Arg-51 lie on the Cytoplasmic side of the membrane. A helical membrane pass occupies residues Tyr-52–Ser-76. At Trp-77–Ala-104 the chain is on the peroxisomal matrix side. A helical membrane pass occupies residues Arg-105–Glu-134. Residues Glu-135 to Ser-139 lie on the Cytoplasmic side of the membrane. A helical transmembrane segment spans residues Ile-140–Leu-178. Residues Trp-179–Ser-243 lie on the Peroxisomal matrix side of the membrane. The helical transmembrane segment at Ser-244–Gly-271 threads the bilayer. Over Asn-272–Gly-353 the chain is Cytoplasmic. Zn(2+) contacts are provided by Cys-298, Cys-301, Cys-319, and Cys-322. An RING-type; degenerate zinc finger spans residues Cys-298–Gly-337.

The protein belongs to the pex2/pex10/pex12 family. As to quaternary structure, component of the PEX2-PEX10-PEX12 retrotranslocation channel.

The protein localises to the peroxisome membrane. It functions in the pathway protein modification; protein ubiquitination. Functionally, component of a retrotranslocation channel required for peroxisome organization by mediating export of the PEX5 receptor from peroxisomes to the cytosol, thereby promoting PEX5 recycling. The retrotranslocation channel is composed of PEX2, PEX10 and PEX12; each subunit contributing transmembrane segments that coassemble into an open channel that specifically allows the passage of PEX5 through the peroxisomal membrane. PEX12 also regulates PEX5 recycling by activating the E3 ubiquitin-protein ligase activity of PEX10. When PEX5 recycling is compromised, PEX12 stimulates PEX10-mediated polyubiquitination of PEX5, leading to its subsequent degradation. This is Peroxisome assembly protein 12-B from Xenopus laevis (African clawed frog).